A 475-amino-acid polypeptide reads, in one-letter code: 23S rRNA (uracil(1939)-C(5))-methyltransferase RlmD (475 aa).

A compositionally biased stretch (basic residues) spans 1–10 (MAMLGKRRPP). A disordered region spans residues 1-33 (MAMLGKRRPPRTANERVRRERGSATRRDDATAD). The segment covering 13–30 (ANERVRRERGSATRRDDA) has biased composition (basic and acidic residues). In terms of domain architecture, TRAM spans 26–85 (RRDDATADGLSIERLAHDGRGVARDPHGKTVFVDQALPGERVRVAVHRQRKRFDEAHVVE). Cys-98, Cys-104, Cys-107, and Cys-183 together coordinate [4Fe-4S] cluster. S-adenosyl-L-methionine contacts are provided by Gln-294, Phe-323, Asn-328, Glu-344, Asp-371, and Asp-388. Cys-414 serves as the catalytic Nucleophile. The segment at 455-475 (TRDTPRGRSTSVEREDHGQGP) is disordered. Residues 457–475 (DTPRGRSTSVEREDHGQGP) show a composition bias toward basic and acidic residues.

Belongs to the class I-like SAM-binding methyltransferase superfamily. RNA M5U methyltransferase family. RlmD subfamily.

The catalysed reaction is uridine(1939) in 23S rRNA + S-adenosyl-L-methionine = 5-methyluridine(1939) in 23S rRNA + S-adenosyl-L-homocysteine + H(+). In terms of biological role, catalyzes the formation of 5-methyl-uridine at position 1939 (m5U1939) in 23S rRNA. The chain is 23S rRNA (uracil(1939)-C(5))-methyltransferase RlmD from Chromohalobacter salexigens (strain ATCC BAA-138 / DSM 3043 / CIP 106854 / NCIMB 13768 / 1H11).